The primary structure comprises 275 residues: Elongation factor Ts (275 aa).

Residues Thr76–Val79 are involved in Mg(2+) ion dislocation from EF-Tu.

The protein belongs to the EF-Ts family.

The protein localises to the cytoplasm. Associates with the EF-Tu.GDP complex and induces the exchange of GDP to GTP. It remains bound to the aminoacyl-tRNA.EF-Tu.GTP complex up to the GTP hydrolysis stage on the ribosome. The sequence is that of Elongation factor Ts from Corynebacterium glutamicum (strain R).